The following is a 170-amino-acid chain: Putative invertase inhibitor (170 aa).

The N-terminal stretch at 1 to 14 is a signal peptide; the sequence is MKLSFSLCIFFLIS. Disulfide bonds link C22–C37 and C93–C133.

Belongs to the PMEI family. As to expression, expressed in pollen (at protein level). Expressed in pollen.

The polypeptide is Putative invertase inhibitor (Platanus orientalis (Oriental plane-tree)).